Here is a 293-residue protein sequence, read N- to C-terminus: 4-hydroxy-tetrahydrodipicolinate synthase (293 aa).

Thr47 serves as a coordination point for pyruvate. Residue Tyr135 is the Proton donor/acceptor of the active site. Catalysis depends on Lys164, which acts as the Schiff-base intermediate with substrate. Ile206 lines the pyruvate pocket.

Belongs to the DapA family. As to quaternary structure, homotetramer; dimer of dimers.

The protein resides in the cytoplasm. The catalysed reaction is L-aspartate 4-semialdehyde + pyruvate = (2S,4S)-4-hydroxy-2,3,4,5-tetrahydrodipicolinate + H2O + H(+). It participates in amino-acid biosynthesis; L-lysine biosynthesis via DAP pathway; (S)-tetrahydrodipicolinate from L-aspartate: step 3/4. In terms of biological role, catalyzes the condensation of (S)-aspartate-beta-semialdehyde [(S)-ASA] and pyruvate to 4-hydroxy-tetrahydrodipicolinate (HTPA). The sequence is that of 4-hydroxy-tetrahydrodipicolinate synthase from Flavobacterium psychrophilum (strain ATCC 49511 / DSM 21280 / CIP 103535 / JIP02/86).